Here is a 339-residue protein sequence, read N- to C-terminus: Anthranilate phosphoribosyltransferase (339 aa).

5-phospho-alpha-D-ribose 1-diphosphate is bound by residues glycine 81, 84-85 (GD), threonine 89, 91-94 (NIST), 109-117 (KHGNRNLSS), and threonine 121. Glycine 81 provides a ligand contact to anthranilate. Serine 93 provides a ligand contact to Mg(2+). Asparagine 112 contributes to the anthranilate binding site. Arginine 167 is a binding site for anthranilate. Mg(2+) is bound by residues aspartate 226 and glutamate 227.

It belongs to the anthranilate phosphoribosyltransferase family. Homodimer. It depends on Mg(2+) as a cofactor.

The catalysed reaction is N-(5-phospho-beta-D-ribosyl)anthranilate + diphosphate = 5-phospho-alpha-D-ribose 1-diphosphate + anthranilate. It participates in amino-acid biosynthesis; L-tryptophan biosynthesis; L-tryptophan from chorismate: step 2/5. Functionally, catalyzes the transfer of the phosphoribosyl group of 5-phosphorylribose-1-pyrophosphate (PRPP) to anthranilate to yield N-(5'-phosphoribosyl)-anthranilate (PRA). This is Anthranilate phosphoribosyltransferase from Ruegeria pomeroyi (strain ATCC 700808 / DSM 15171 / DSS-3) (Silicibacter pomeroyi).